Here is a 393-residue protein sequence, read N- to C-terminus: Putative B3 domain-containing protein Os06g0632500 (393 aa).

3 consecutive DNA-binding regions (TF-B3) follow at residues 27 to 123 (LSVP…FDPG), 141 to 238 (RPRF…FLQN), and 316 to 393 (NSFT…VQRR).

It is found in the nucleus. The protein is Putative B3 domain-containing protein Os06g0632500 of Oryza sativa subsp. japonica (Rice).